Here is a 2406-residue protein sequence, read N- to C-terminus: Highly reducing polyketide synthase dmxL2 (2406 aa).

Residues 1-399 (MEAFWSASKK…GTNAHAVLDD (399 aa)) enclose the Ketosynthase family 3 (KS3) domain. Residue Cys-130 is part of the active site. The active-site For beta-ketoacyl synthase activity is the Cys-130. Residues 414 to 476 (GHASNGTNGT…GPTDGPTSRP (63 aa)) are disordered. Positions 417–448 (SNGTNGTLTNGHILNGEHTSNGMNGTLTNGHA) are enriched in polar residues. Positions 574 to 911 (FVFTGQGAQW…LAGSLFTQGY (338 aa)) are malonyl-CoA:ACP transacylase (MAT) domain. The active-site For malonyltransferase activity is the Ser-665. An N-terminal hotdog fold region spans residues 962-1096 (PSLLGSPSPS…GLLVIEYEAA (135 aa)). The region spanning 962 to 1278 (PSLLGSPSPS…CAEIAGASSN (317 aa)) is the PKS/mFAS DH domain. The dehydratase (DH) domain stretch occupies residues 964–1273 (LLGSPSPSLA…IEGFLCAEIA (310 aa)). His-994 (proton acceptor; for dehydratase activity) is an active-site residue. Residues 1124–1278 (VHRLDPSGFY…CAEIAGASSN (155 aa)) form a C-terminal hotdog fold region. Asp-1189 acts as the Proton donor; for dehydratase activity in catalysis. An enoylreductase (ER) domain region spans residues 1694–2006 (GMLGSVCLEP…TGKHLGKIAL (313 aa)). A ketoreductase (KR) domain region spans residues 2032-2210 (GVYLLVGGLG…TTVDLGIMRD (179 aa)). In terms of domain architecture, Carrier spans 2318-2395 (EASDSVLEAL…TFCNRIAAKS (78 aa)). O-(pantetheine 4'-phosphoryl)serine is present on Ser-2355.

It participates in secondary metabolite biosynthesis. Highly reducing polyketide synthase; part of the gene cluster that mediates the biosynthesis of the dimeric xanthones cryptosporioptides. The pathway begins with the synthesis of atrochrysone thioester by the polyketide synthase dmx-nrPKS. The atrochrysone carboxyl ACP thioesterase dmxR1 then breaks the thioester bond and releases the atrochrysone carboxylic acid from dmx-nrPKS. Atrochrysone carboxylic acid is decarboxylated by the decarboxylase dmxR15, and oxidized by the anthrone oxygenase dmxR16 to yield emodin. Emodin is then reduced to emodin hydroquinone by the oxidoreductase dmxR7. A-ring reduction by the short chain dehydrogenase dmxR18, dehydration by the scytalone dehydratase-like protein dmxR17 and probable spontaneous re-oxidation, results in overall deoxygenation to chrysophanol. Baeyer-Villiger oxidation by the Baeyer-Villiger monooxygenase (BVMO) dmxR6 then yields monodictylactone in equilibrium with monodictyphenone. In the case of the cryptosporioptides biosynthesis, monodictylactone is reduced at C-12 to an alcohol (by the short chain dehydrogenases dmxR12 or dmxR8) and hydroxylated at C-5 by dmxR9, yielding the electron-rich aromatic which could eliminate H(2)O to form the ortho-quinonemethide, followed by tautomerisation to paraquinone and complete the formal reduction to produce the 10-methylgroup. Conjugate addition of C-4a-OH to the resulting paraquinone by the monooxygenase dmxR10 then gives cyclohexadienone, which is then reduced at C-5 by the short chain dehydrogenase dmxR3 to give the dihydroxanthone. The 6,7-epoxide in the cryptosporioptides could be introduced by the cytochrome P450 monooxygenase dmxL3. The highly reducing PKS dmxL2 manufactures butyrate, which is further carboxylated by dmxL1 to form ethylmalonate. It is not yet clear whether the carboxylation occurs while the butyrate is attached to the ACP of dmxL2, but this unusual fungal metabolite could then be esterified to O-5 by the O-acetyltransferase dmxR13. Finally, dimerization performed by dmxR5 gives the observed dimers cryptosporioptides A, B and C as the final products of the pathway. The polypeptide is Highly reducing polyketide synthase dmxL2 (Cryptosporiopsis sp. (strain 8999)).